We begin with the raw amino-acid sequence, 182 residues long: ATP synthase subunit delta (182 aa).

The protein belongs to the ATPase delta chain family. F-type ATPases have 2 components, F(1) - the catalytic core - and F(0) - the membrane proton channel. F(1) has five subunits: alpha(3), beta(3), gamma(1), delta(1), epsilon(1). CF(0) has four main subunits: a(1), b(1), b'(1) and c(10-14). The alpha and beta chains form an alternating ring which encloses part of the gamma chain. F(1) is attached to F(0) by a central stalk formed by the gamma and epsilon chains, while a peripheral stalk is formed by the delta, b and b' chains.

Its subcellular location is the cellular thylakoid membrane. Its function is as follows. F(1)F(0) ATP synthase produces ATP from ADP in the presence of a proton or sodium gradient. F-type ATPases consist of two structural domains, F(1) containing the extramembraneous catalytic core and F(0) containing the membrane proton channel, linked together by a central stalk and a peripheral stalk. During catalysis, ATP synthesis in the catalytic domain of F(1) is coupled via a rotary mechanism of the central stalk subunits to proton translocation. Functionally, this protein is part of the stalk that links CF(0) to CF(1). It either transmits conformational changes from CF(0) to CF(1) or is implicated in proton conduction. This is ATP synthase subunit delta from Microcystis aeruginosa (strain NIES-843 / IAM M-2473).